A 573-amino-acid polypeptide reads, in one-letter code: Glucocorticoid modulatory element-binding protein 1 (573 aa).

At A2 the chain carries N-acetylalanine. The region spanning 82 to 166 is the SAND domain; sequence TGTIEANEDM…RKMMDSGQID (85 aa). C113 contacts Zn(2+). Residues K139, K143, K146, and R157 each contribute to the DNA site. Zn(2+) is bound by residues H170, C174, and C178. Positions 321–367 form a coiled coil; it reads LDNRRNQVEQGEEQFLYTLTDLERQLEEQKKQGQDHRLKSQTVQNVV. A disordered region spans residues 370 to 398; sequence PVSTPKPPKRPRLQRPASTTVLSPSPPVQ.

In terms of assembly, homodimer, and heterodimer of GMEB1 and GMEB2. GMEB1 and GMEB2 form the parvovirus initiator complex (PIF). Interacts with the glucocorticoid receptor (NR3C1) and NCOA2/TIF2. May interact with HSP27 and CREB-binding protein (CBP).

The protein resides in the nucleus. It localises to the cytoplasm. In terms of biological role, trans-acting factor that binds to glucocorticoid modulatory elements (GME) present in the TAT (tyrosine aminotransferase) promoter and increases sensitivity to low concentrations of glucocorticoids. Also binds to the transferrin receptor promoter. Essential auxiliary factor for the replication of parvoviruses. The polypeptide is Glucocorticoid modulatory element-binding protein 1 (GMEB1) (Homo sapiens (Human)).